A 270-amino-acid polypeptide reads, in one-letter code: HTH-type transcriptional activator AllS (270 aa).

In terms of domain architecture, HTH lysR-type spans 4 to 61 (LDPETLRTFVSVAETGSFSRAAEKLYKTTATISYRIKLLEDNTGVALFSRTTRSVLLT). A DNA-binding region (H-T-H motif) is located at residues 21-40 (FSRAAEKLYKTTATISYRIK).

The protein belongs to the LysR transcriptional regulatory family.

Functionally, positive regulator essential for the expression of allD operon. Binds to the allD promoter. The chain is HTH-type transcriptional activator AllS (allS) from Klebsiella pneumoniae.